The following is a 109-amino-acid chain: Head completion protein gp16 (109 aa).

It belongs to the Caudoviricetes gp7/gp16 head completion protein family. Homododecamer. Interacts with the connector protein gp15. Interacts with the head-tail joining protein gp17.

The protein resides in the virion. Its function is as follows. Functions as a stopper that is part of the head-tail connector and that locks the viral DNA in the capsid. Following tail attachment to the entry receptor, seems to open by a diaphragm-like motion, allowing the genome to exit the capsid through the tail tube to the host cell. During assembly, functions as a docking platform which the preassembled tail tapered by the head-tail joining protein gp17 can bind to. This chain is Head completion protein gp16 (16), found in Bacillus subtilis (Bacteriophage SPP1).